A 214-amino-acid polypeptide reads, in one-letter code: Phosphatidylserine decarboxylase proenzyme (214 aa).

Residue Ser183 is the Schiff-base intermediate with substrate; via pyruvic acid of the active site. The residue at position 183 (Ser183) is a Pyruvic acid (Ser); by autocatalysis.

The protein belongs to the phosphatidylserine decarboxylase family. PSD-A subfamily. In terms of assembly, heterodimer of a large membrane-associated beta subunit and a small pyruvoyl-containing alpha subunit. Pyruvate is required as a cofactor. In terms of processing, is synthesized initially as an inactive proenzyme. Formation of the active enzyme involves a self-maturation process in which the active site pyruvoyl group is generated from an internal serine residue via an autocatalytic post-translational modification. Two non-identical subunits are generated from the proenzyme in this reaction, and the pyruvate is formed at the N-terminus of the alpha chain, which is derived from the carboxyl end of the proenzyme. The post-translation cleavage follows an unusual pathway, termed non-hydrolytic serinolysis, in which the side chain hydroxyl group of the serine supplies its oxygen atom to form the C-terminus of the beta chain, while the remainder of the serine residue undergoes an oxidative deamination to produce ammonia and the pyruvoyl prosthetic group on the alpha chain.

Its subcellular location is the cell membrane. The enzyme catalyses a 1,2-diacyl-sn-glycero-3-phospho-L-serine + H(+) = a 1,2-diacyl-sn-glycero-3-phosphoethanolamine + CO2. The protein operates within phospholipid metabolism; phosphatidylethanolamine biosynthesis; phosphatidylethanolamine from CDP-diacylglycerol: step 2/2. Its function is as follows. Catalyzes the formation of phosphatidylethanolamine (PtdEtn) from phosphatidylserine (PtdSer). The chain is Phosphatidylserine decarboxylase proenzyme from Desulfotalea psychrophila (strain LSv54 / DSM 12343).